Consider the following 335-residue polypeptide: Taste receptor type 2 member 119 (335 aa).

Residues 1 to 7 are Extracellular-facing; the sequence is MMEGHIL. A helical membrane pass occupies residues 8–28; that stretch reads FFFLVVMVQFVTGVLANGLIV. At 29-43 the chain is on the cytoplasmic side; it reads VVHAIDLIMWKKMAP. A helical transmembrane segment spans residues 44 to 64; the sequence is LDLLLFCLATSRIILQLCILF. The Extracellular portion of the chain corresponds to 65–81; that stretch reads AQLCLFSLVRHTLFEDN. N-linked (GlcNAc...) asparagine glycosylation is present at asparagine 81. Residues 82 to 102 traverse the membrane as a helical segment; that stretch reads ITFVFIINELSLWFATWLGVF. Residues 103–124 are Cytoplasmic-facing; the sequence is YCAKIATIPHPLFLWLKMRISR. A helical transmembrane segment spans residues 125–145; the sequence is LVPWLILGSVLYVIITTFIHS. Residues 146 to 176 lie on the Extracellular side of the membrane; that stretch reads RETSAILKPIFISLFPKNATQVGTGHATLLS. Asparagine 163 carries an N-linked (GlcNAc...) asparagine glycan. The helical transmembrane segment at 177 to 197 threads the bilayer; sequence VLVLGLTLPLFIFTVAVLLLI. Topologically, residues 198-224 are cytoplasmic; the sequence is YSLWNYSRQMRTMVGTREYSGHAHISA. Residues 225–245 traverse the membrane as a helical segment; that stretch reads MLSILSFLILYLSHYMVAVLI. The Extracellular segment spans residues 246-256; it reads STQVLYLGSRT. The chain crosses the membrane as a helical span at residues 257 to 277; sequence FVFCLLVIGMYPSIHSIVLIL. Residues 278-335 are Cytoplasmic-facing; sequence GNPKLKRNAKMFIVHCKCCHCTRAWVTSRSPRLSDLPVPPTHPSANKTSCSEACIMPS. Residues 308-327 form a disordered region; sequence PRLSDLPVPPTHPSANKTSC.

The protein belongs to the G-protein coupled receptor T2R family. Expressed in subsets of taste receptor cells of the tongue and palate epithelium and exclusively in gustducin-positive cells. Expressed in the duodenum, antrum and fundus (part of the stomach).

Its subcellular location is the membrane. Functionally, gustducin-coupled receptor implicated in the perception of bitter compounds in the oral cavity and the gastrointestinal tract. Signals through PLCB2 and the calcium-regulated cation channel TRPM5. In Rattus norvegicus (Rat), this protein is Taste receptor type 2 member 119 (Tas2r119).